Reading from the N-terminus, the 158-residue chain is Endoribonuclease YbeY (158 aa).

Residues His-124, His-128, and His-134 each contribute to the Zn(2+) site.

It belongs to the endoribonuclease YbeY family. Requires Zn(2+) as cofactor.

The protein resides in the cytoplasm. Functionally, single strand-specific metallo-endoribonuclease involved in late-stage 70S ribosome quality control and in maturation of the 3' terminus of the 16S rRNA. The protein is Endoribonuclease YbeY of Caldicellulosiruptor bescii (strain ATCC BAA-1888 / DSM 6725 / KCTC 15123 / Z-1320) (Anaerocellum thermophilum).